Consider the following 80-residue polypeptide: MLIAWPDRVHCCEIMLQEGARVVDAVEMAALNGIEQAVGYAVFGVLVTSDHVLNDGDRVELLRPLLIDPKEARRRRAVSA.

The protein belongs to the UPF0125 (RnfH) family.

The sequence is that of UPF0125 protein PD_1376 from Xylella fastidiosa (strain Temecula1 / ATCC 700964).